The chain runs to 390 residues: 3-ketoacyl-CoA thiolase (390 aa).

C95 serves as the catalytic Acyl-thioester intermediate. Active-site proton acceptor residues include H346 and C376.

This sequence belongs to the thiolase-like superfamily. Thiolase family. Heterotetramer of two alpha chains (FadB) and two beta chains (FadA).

The protein localises to the cytoplasm. It catalyses the reaction an acyl-CoA + acetyl-CoA = a 3-oxoacyl-CoA + CoA. Its pathway is lipid metabolism; fatty acid beta-oxidation. In terms of biological role, catalyzes the final step of fatty acid oxidation in which acetyl-CoA is released and the CoA ester of a fatty acid two carbons shorter is formed. This chain is 3-ketoacyl-CoA thiolase, found in Psychrobacter sp. (strain PRwf-1).